A 280-amino-acid polypeptide reads, in one-letter code: Proteasome subunit beta (280 aa).

A propeptide spans 1 to 53 (removed in mature form; by autocatalysis); it reads MSEYSAGRSGFSPAYLDRVGSSFTDFLAAAAPHLLPGSRPVPQIPVGNVTPHG. T54 acts as the Nucleophile in catalysis.

Belongs to the peptidase T1B family. The 20S proteasome core is composed of 14 alpha and 14 beta subunits that assemble into four stacked heptameric rings, resulting in a barrel-shaped structure. The two inner rings, each composed of seven catalytic beta subunits, are sandwiched by two outer rings, each composed of seven alpha subunits. The catalytic chamber with the active sites is on the inside of the barrel. Has a gated structure, the ends of the cylinder being occluded by the N-termini of the alpha-subunits. Is capped by the proteasome-associated ATPase, ARC.

It is found in the cytoplasm. It catalyses the reaction Cleavage of peptide bonds with very broad specificity.. Its pathway is protein degradation; proteasomal Pup-dependent pathway. The formation of the proteasomal ATPase ARC-20S proteasome complex, likely via the docking of the C-termini of ARC into the intersubunit pockets in the alpha-rings, may trigger opening of the gate for substrate entry. Interconversion between the open-gate and close-gate conformations leads to a dynamic regulation of the 20S proteasome proteolysis activity. Its function is as follows. Component of the proteasome core, a large protease complex with broad specificity involved in protein degradation. This is Proteasome subunit beta from Geodermatophilus obscurus (strain ATCC 25078 / DSM 43160 / JCM 3152 / CCUG 61914 / KCC A-0152 / KCTC 9177 / NBRC 13315 / NRRL B-3577 / G-20).